The following is a 186-amino-acid chain: Large ribosomal subunit protein uL10 (186 aa).

It belongs to the universal ribosomal protein uL10 family. Part of the ribosomal stalk of the 50S ribosomal subunit. The N-terminus interacts with L11 and the large rRNA to form the base of the stalk. The C-terminus forms an elongated spine to which L12 dimers bind in a sequential fashion forming a multimeric L10(L12)X complex.

Forms part of the ribosomal stalk, playing a central role in the interaction of the ribosome with GTP-bound translation factors. In Nitrosococcus oceani (strain ATCC 19707 / BCRC 17464 / JCM 30415 / NCIMB 11848 / C-107), this protein is Large ribosomal subunit protein uL10.